Consider the following 188-residue polypeptide: NADH-quinone oxidoreductase subunit I 2 (188 aa).

4Fe-4S ferredoxin-type domains follow at residues 56-88 (HFLKRDEEGEIKCVACELCARICPCDCIEVVPY) and 98-127 (AKFEIDTARCLFCGLCEDACPADAIALGQQ). Residues cysteine 68, cysteine 71, cysteine 74, cysteine 78, cysteine 107, cysteine 110, cysteine 113, and cysteine 117 each contribute to the [4Fe-4S] cluster site.

The protein belongs to the complex I 23 kDa subunit family. NDH-1 is composed of 14 different subunits. Subunits NuoA, H, J, K, L, M, N constitute the membrane sector of the complex. Requires [4Fe-4S] cluster as cofactor.

The protein resides in the cell inner membrane. It catalyses the reaction a quinone + NADH + 5 H(+)(in) = a quinol + NAD(+) + 4 H(+)(out). In terms of biological role, NDH-1 shuttles electrons from NADH, via FMN and iron-sulfur (Fe-S) centers, to quinones in the respiratory chain. The immediate electron acceptor for the enzyme in this species is believed to be ubiquinone. Couples the redox reaction to proton translocation (for every two electrons transferred, four hydrogen ions are translocated across the cytoplasmic membrane), and thus conserves the redox energy in a proton gradient. This chain is NADH-quinone oxidoreductase subunit I 2, found in Rhizobium etli (strain ATCC 51251 / DSM 11541 / JCM 21823 / NBRC 15573 / CFN 42).